Consider the following 862-residue polypeptide: Ecdysone-induced protein 78C (862 aa).

4 disordered regions span residues 28 to 83 (SSEQ…EEAL), 97 to 138 (LHFF…KQHH), 173 to 210 (ASLSPQQQQQRQHTHQQQQQQQQQQQHPGQQQHQLNCT), and 230 to 353 (ASNH…NNNN). Residues 37-46 (KQEDLIKDFT) are compositionally biased toward basic and acidic residues. The span at 47–82 (RDEEEQPSEEEAEEEDNEEDEEEEGEEEEEDEDEEA) shows a compositional bias: acidic residues. A compositionally biased stretch (polar residues) spans 105 to 119 (DSSTQGAYSEANSLE). Low complexity-rich tracts occupy residues 173–206 (ASLSPQQQQQRQHTHQQQQQQQQQQQHPGQQQHQ), 230–291 (ASNH…NNSV), 308–335 (QQQQPLPTTQLQQQQQHQQQLQHPQQQQ), and 342–353 (SSSSNGSSNNNN). A DNA-binding region (nuclear receptor) is located at residues 360-435 (FVPCKVCGDK…AGMSRDSVRY (76 aa)). NR C4-type zinc fingers lie at residues 363–383 (CKVCGDKASGYHYGVTSCEGC) and 399–418 (CLRDGKCLVIRLNRNRCQYC). Positions 444–557 (ELNGAAASSA…NNNSSSGNAS (114 aa)) are disordered. The span at 447 to 460 (GAAASSAAAGAPAS) shows a compositional bias: low complexity. Polar residues predominate over residues 463-472 (VDDSTSSTLH). The span at 475 to 508 (HLQQQQQQHLLQQQQQQQHQPQLQQHHQLQQQPH) shows a compositional bias: low complexity. Over residues 516–533 (TPSTPQTPQMCSIASSPS) the composition is skewed to polar residues. Residues 539 to 555 (NSANNNNNNNNNSSSGN) show a composition bias toward low complexity. The NR LBD domain occupies 626–855 (YTEELTRELM…PPLFAEIFDI (230 aa)).

The protein belongs to the nuclear hormone receptor family. NR1 subfamily.

It localises to the nucleus. In terms of biological role, induces the early late puff 78C which triggers puparium formation and development. In Drosophila melanogaster (Fruit fly), this protein is Ecdysone-induced protein 78C (Eip78C).